A 55-amino-acid polypeptide reads, in one-letter code: Large ribosomal subunit protein bL33 (55 aa).

Over residues 1–11 (MAKGARDKIKL) the composition is skewed to basic and acidic residues. A disordered region spans residues 1-24 (MAKGARDKIKLESTAGTGHFYTTT). Residues 14–24 (TAGTGHFYTTT) are compositionally biased toward polar residues.

The protein belongs to the bacterial ribosomal protein bL33 family.

This is Large ribosomal subunit protein bL33 from Burkholderia multivorans (strain ATCC 17616 / 249).